A 289-amino-acid chain; its full sequence is 4-diphosphocytidyl-2-C-methyl-D-erythritol kinase (289 aa).

The active site involves K16. 99-109 (PMGGGLGGGSS) contacts ATP. Residue D141 is part of the active site.

Belongs to the GHMP kinase family. IspE subfamily.

It catalyses the reaction 4-CDP-2-C-methyl-D-erythritol + ATP = 4-CDP-2-C-methyl-D-erythritol 2-phosphate + ADP + H(+). Its pathway is isoprenoid biosynthesis; isopentenyl diphosphate biosynthesis via DXP pathway; isopentenyl diphosphate from 1-deoxy-D-xylulose 5-phosphate: step 3/6. In terms of biological role, catalyzes the phosphorylation of the position 2 hydroxy group of 4-diphosphocytidyl-2C-methyl-D-erythritol. The sequence is that of 4-diphosphocytidyl-2-C-methyl-D-erythritol kinase from Ralstonia pickettii (strain 12J).